We begin with the raw amino-acid sequence, 1384 residues long: MPNMKPLLEDAKRRVDRRLSASRQSISSSRIFSSAFPDRLKDDHDAQVDYTAPPRGAGSRDGQLPYMHQSIFSMIAAVGSKSDFHARFDESSDSEGEAEGQTQKQPGKASLSNKKKFPLSPTLKPQSTLEGRGRRHRRSISDNKLLRSLKPSPKSSKGTETTVQTEPPTSDEMSPLASPRRARSATPRAAPILSRMLEAEALLDKKQSADQPSSSTKGETDGTSEQSCASPLSLRLKEMFGFEMPEKVLMEYACSLLQNILLQGYMYVTEGHICFYAYLPRKSAVTIRSGYLHKRGRKNPKYNRYWFSLKGDVLSYYTDPSSLYFPSGHVDLRYGISASLTEQKDKDKEVRDFQVTTDQRTYYFRADSSASAKEWVKALQKVIFRAHNEGDSVKISFPIESIIDIEESPITDLAETFKIRVVESDESYAIDEYYFSFFESGRDAYNFVKGLISEGPMKTSQLLPPPSEQTSPATRARGPRNRWSLNSDLSQSRGNGIFKTQRKRSASTGQTNSGPDGIGMSPRQRDLSDSFVNSFEQATDASAVLQSMIDTTESASQILNRSDVFQSPTIHTLRQRHPSGDRTGRRLSDGTARSTHPNAADANRNGQEMQYASSDSDQGTQHPSKVNSSAPTLNELVKAGAYPLQRAAGFAEYLRSRSRQMSNLLASESMGYIEKVSGMWAGGRRHYGETEGVLPDDQDVDPEDKEDGVKHGDRFRAHFALPSTERLQATYYAYLHRVLPLYGKIYISQKKLCFRSLIPGTRTKLILPLKDIENVEKEKGFRFGYQGLVIIIRGHEELFFEFNTADARDDCAVTVHQSLESMRFLVESGLLAEQEKDEIESAQAEHRMLQEARLDGAGEHDSHASVNESSELHPIFDDPRASIINFKPSESLRITCLTIGSRGDVQPYIALCKGLLAEGHKPKIATHAEFEPWVRQHGIDFAPVDGDPAELMRICVENGMFTYSFLKEASTKFRGWIDDLLSSAWASCQDSDLLIESPSAMAGIHIAEALRIPYFRAFTMPWSRTRAYPHAFAVPENKMGGAYNYITYVMFDTVFWKAIAGQVNRWRKKQLGLKATTLDKMQPNKVPFLYNYSPSVVAPPLDYPDWIRITGYWFLSEGGNWTPPTDLLDFIHRARSDGKKIVYIGFGSIVVSDPSALTRTVVESVLKADVRCILSKGWSDRLGDPASAKVEIPLPPEIFQIQAAPHDWLFSQIDAAAHHGGAGTTGASLRAGVPTIVKPFFGDQFFFGTRVEDLGVGICMKKLNVSVFSRALWEATHSERMIVKARELGAQIRSENGVDTAIQAIYRDLEYAKTLARQRSIVSSTPFSPTPSAKTTAEQEEDDVDDSEEWTFVGDDTEIDVSRRLRDRAVSDADMLPEPVTSAS.

Disordered regions lie at residues Met1–Leu64, Ala86–Ala189, and Asp204–Ala229. Positions Leu7–Leu19 are enriched in basic and acidic residues. A compositionally biased stretch (low complexity) spans Ala21 to Phe36. Residues Asp38–Gln47 are compositionally biased toward basic and acidic residues. Low complexity predominate over residues Leu146 to Ser156. Residues Gly158–Glu172 show a composition bias toward polar residues. Over residues Ser174–Ala189 the composition is skewed to low complexity. Over residues Ala209–Ala229 the composition is skewed to polar residues. One can recognise a GRAM 1 domain in the interval Lys237 to Ala284. The 100-residue stretch at Val285–Phe384 folds into the PH domain. 2 disordered regions span residues Met457 to Asp526 and Asn560 to Ser629. Polar residues-rich tracts occupy residues Lys458–Ala473, Trp483–Gly494, and Asn560–Thr572. Over residues Pro578–Ser588 the composition is skewed to basic and acidic residues. Positions Arg604 to Ser629 are enriched in polar residues. In terms of domain architecture, GRAM 2 spans Arg714 to Gln817. Residues Ser901, Arg902, Asp904, Ala1204, His1206, His1219, Gly1223, Thr1224, Asp1243, and Gln1244 each coordinate UDP-alpha-D-glucose. Positions Val1322–Thr1336 are enriched in polar residues. The disordered stretch occupies residues Val1322–Trp1350. Residues Glu1338 to Trp1350 are compositionally biased toward acidic residues.

This sequence belongs to the glycosyltransferase 28 family.

It is found in the cytoplasm. Its subcellular location is the preautophagosomal structure membrane. The enzyme catalyses a sterol + UDP-alpha-D-glucose = a sterol 3-beta-D-glucoside + UDP + H(+). The catalysed reaction is ergosterol + UDP-alpha-D-glucose = ergosteryl 3-beta-D-glucoside + UDP + H(+). Functionally, sterol glycosyltransferase responsible for the glycosylation of ergosterol to form ergosterol-glucoside. Involved in cytoplasm to vacuole transport (Cvt), pexophagy or nonselective autophagy. The polypeptide is Sterol 3-beta-glucosyltransferase (Aspergillus oryzae (strain ATCC 42149 / RIB 40) (Yellow koji mold)).